The sequence spans 357 residues: UDP-N-acetylglucosamine--N-acetylmuramyl-(pentapeptide) pyrophosphoryl-undecaprenol N-acetylglucosamine transferase (357 aa).

UDP-N-acetyl-alpha-D-glucosamine is bound by residues 12–14 (TGG), Asn124, Arg162, Ser190, Ile244, 263–268 (ALTVAE), and Gln289.

Belongs to the glycosyltransferase 28 family. MurG subfamily.

It localises to the cell inner membrane. The catalysed reaction is di-trans,octa-cis-undecaprenyl diphospho-N-acetyl-alpha-D-muramoyl-L-alanyl-D-glutamyl-meso-2,6-diaminopimeloyl-D-alanyl-D-alanine + UDP-N-acetyl-alpha-D-glucosamine = di-trans,octa-cis-undecaprenyl diphospho-[N-acetyl-alpha-D-glucosaminyl-(1-&gt;4)]-N-acetyl-alpha-D-muramoyl-L-alanyl-D-glutamyl-meso-2,6-diaminopimeloyl-D-alanyl-D-alanine + UDP + H(+). Its pathway is cell wall biogenesis; peptidoglycan biosynthesis. Its function is as follows. Cell wall formation. Catalyzes the transfer of a GlcNAc subunit on undecaprenyl-pyrophosphoryl-MurNAc-pentapeptide (lipid intermediate I) to form undecaprenyl-pyrophosphoryl-MurNAc-(pentapeptide)GlcNAc (lipid intermediate II). In Alkalilimnicola ehrlichii (strain ATCC BAA-1101 / DSM 17681 / MLHE-1), this protein is UDP-N-acetylglucosamine--N-acetylmuramyl-(pentapeptide) pyrophosphoryl-undecaprenol N-acetylglucosamine transferase.